We begin with the raw amino-acid sequence, 388 residues long: F-box protein At3g49510 (388 aa).

The region spanning 1–47 is the F-box domain; the sequence is MTTISDLSDDLVGDILSRVPFTSLISVRSTCKKWNALSKNQIFGRKT.

The polypeptide is F-box protein At3g49510 (Arabidopsis thaliana (Mouse-ear cress)).